Reading from the N-terminus, the 120-residue chain is Small ribosomal subunit protein uS13 (120 aa).

The disordered stretch occupies residues His92–Lys120. Over residues Ala107–Lys120 the composition is skewed to basic residues.

Belongs to the universal ribosomal protein uS13 family. As to quaternary structure, part of the 30S ribosomal subunit. Forms a loose heterodimer with protein S19. Forms two bridges to the 50S subunit in the 70S ribosome.

In terms of biological role, located at the top of the head of the 30S subunit, it contacts several helices of the 16S rRNA. In the 70S ribosome it contacts the 23S rRNA (bridge B1a) and protein L5 of the 50S subunit (bridge B1b), connecting the 2 subunits; these bridges are implicated in subunit movement. Contacts the tRNAs in the A and P-sites. This chain is Small ribosomal subunit protein uS13, found in Helicobacter hepaticus (strain ATCC 51449 / 3B1).